A 127-amino-acid polypeptide reads, in one-letter code: Small ribosomal subunit protein uS12m (127 aa).

Belongs to the universal ribosomal protein uS12 family.

Its subcellular location is the mitochondrion. The protein is Small ribosomal subunit protein uS12m (RPS12) of Acanthamoeba castellanii (Amoeba).